Reading from the N-terminus, the 647-residue chain is DEAD-box ATP-dependent RNA helicase 18 (647 aa).

The Q motif signature appears at Phe23–Ala51. The Helicase ATP-binding domain maps to Ile54 to Val232. Ala67 to Thr74 is an ATP binding site. Residues Asp180 to Asp183 carry the DEAD box motif. The Helicase C-terminal domain occupies Gln274–Ala430. Positions Lys507–Val582 form a coiled coil. Basic and acidic residues predominate over residues Ala512–Glu545. Disordered regions lie at residues Ala512–Met565 and Lys590–Arg647. Over residues Glu596–Leu610 the composition is skewed to acidic residues. Residues Lys619–Ser633 show a composition bias toward basic residues.

This sequence belongs to the DEAD box helicase family. DDX55/SPB4 subfamily. As to quaternary structure, interacts with BRI1. Phosphorylated.

It catalyses the reaction ATP + H2O = ADP + phosphate + H(+). In Oryza sativa subsp. japonica (Rice), this protein is DEAD-box ATP-dependent RNA helicase 18.